We begin with the raw amino-acid sequence, 341 residues long: Glycerol-1-phosphate dehydrogenase [NAD(P)+] (341 aa).

Residues 81–85 and 103–106 contribute to the NAD(+) site; these read GKAID and TTAS. Asp-108 lines the substrate pocket. Ser-112 is an NAD(+) binding site. Asp-151 lines the substrate pocket. Zn(2+)-binding residues include Asp-151 and His-232. Residue His-236 participates in substrate binding. Zn(2+) is bound at residue His-253.

Belongs to the glycerol-1-phosphate dehydrogenase family. It depends on Zn(2+) as a cofactor.

The protein resides in the cytoplasm. The enzyme catalyses sn-glycerol 1-phosphate + NAD(+) = dihydroxyacetone phosphate + NADH + H(+). It catalyses the reaction sn-glycerol 1-phosphate + NADP(+) = dihydroxyacetone phosphate + NADPH + H(+). The protein operates within membrane lipid metabolism; glycerophospholipid metabolism. Catalyzes the NAD(P)H-dependent reduction of dihydroxyacetonephosphate (DHAP or glycerone phosphate) to glycerol 1-phosphate (G1P). The G1P thus generated is used as the glycerophosphate backbone of phospholipids in the cellular membranes of Archaea. This chain is Glycerol-1-phosphate dehydrogenase [NAD(P)+], found in Methanococcus aeolicus (strain ATCC BAA-1280 / DSM 17508 / OCM 812 / Nankai-3).